Here is a 1177-residue protein sequence, read N- to C-terminus: Putative ATP-dependent RNA helicase TDRD12 (1177 aa).

The Tudor 1 domain maps to 56–118 (TLEEGQVCVV…RVVVESFMQL (63 aa)). Residues 447–635 (WPPIARGCDV…KEFMNDPYIV (189 aa)) form the Helicase ATP-binding domain. An ATP-binding site is contributed by 460–467 (SHCESNPL). Residues 574 to 577 (DEVE) carry the DEAH box motif. Residues 900 to 999 (IVDKHMDLYA…HTLPPQAVEF (100 aa)) form the Tudor 2 domain. The segment at 1098-1177 (EESLSQTPPR…VFKRWLSSNR (80 aa)) is disordered. The segment covering 1100–1115 (SLSQTPPRVTGTSPAQ) has biased composition (polar residues).

In terms of assembly, component of a mRNP complex containing PIWIL2, TDRD1 and piRNAs. Component of the PET complex, at least composed of EXD1, PIWIL2, TDRD12 and piRNAs.

It catalyses the reaction ATP + H2O = ADP + phosphate + H(+). Probable ATP-binding RNA helicase required during spermatogenesis to repress transposable elements and preventing their mobilization, which is essential for the germline integrity. Acts via the piRNA metabolic process, which mediates the repression of transposable elements during meiosis by forming complexes composed of piRNAs and Piwi proteins and governs the methylation and subsequent repression of transposons. Involved in the secondary piRNAs metabolic process. Acts via the PET complex, a multiprotein complex required during the secondary piRNAs metabolic process for the PIWIL2 slicing-triggered loading of PIWIL4 piRNAs. The polypeptide is Putative ATP-dependent RNA helicase TDRD12 (TDRD12) (Homo sapiens (Human)).